The primary structure comprises 201 residues: Large ribosomal subunit protein bL25 (201 aa).

This sequence belongs to the bacterial ribosomal protein bL25 family. CTC subfamily. As to quaternary structure, part of the 50S ribosomal subunit; part of the 5S rRNA/L5/L18/L25 subcomplex. Contacts the 5S rRNA. Binds to the 5S rRNA independently of L5 and L18.

Its function is as follows. This is one of the proteins that binds to the 5S RNA in the ribosome where it forms part of the central protuberance. This is Large ribosomal subunit protein bL25 from Aromatoleum aromaticum (strain DSM 19018 / LMG 30748 / EbN1) (Azoarcus sp. (strain EbN1)).